The sequence spans 209 residues: Uracil phosphoribosyltransferase (209 aa).

Residues Arg-79, Arg-104, and 131-139 (DPMLATGGS) contribute to the 5-phospho-alpha-D-ribose 1-diphosphate site. Residues Ile-194 and 199–201 (GDA) each bind uracil. Asp-200 is a 5-phospho-alpha-D-ribose 1-diphosphate binding site.

The protein belongs to the UPRTase family. It depends on Mg(2+) as a cofactor.

It carries out the reaction UMP + diphosphate = 5-phospho-alpha-D-ribose 1-diphosphate + uracil. It functions in the pathway pyrimidine metabolism; UMP biosynthesis via salvage pathway; UMP from uracil: step 1/1. Its activity is regulated as follows. Allosterically activated by GTP. Its function is as follows. Catalyzes the conversion of uracil and 5-phospho-alpha-D-ribose 1-diphosphate (PRPP) to UMP and diphosphate. This chain is Uracil phosphoribosyltransferase, found in Lachnoclostridium phytofermentans (strain ATCC 700394 / DSM 18823 / ISDg) (Clostridium phytofermentans).